The primary structure comprises 172 residues: Cell division protein SepF (172 aa).

The interval 16-78 is disordered; that stretch reads DGDEHYEPQP…RAASNRDDSS (63 aa). Basic and acidic residues predominate over residues 17-48; that stretch reads GDEHYEPQPEGKQTRPAQKNEEYVDQEIRHTE.

The protein belongs to the SepF family. Homodimer. Interacts with FtsZ.

The protein localises to the cytoplasm. In terms of biological role, cell division protein that is part of the divisome complex and is recruited early to the Z-ring. Probably stimulates Z-ring formation, perhaps through the cross-linking of FtsZ protofilaments. Its function overlaps with FtsA. This Renibacterium salmoninarum (strain ATCC 33209 / DSM 20767 / JCM 11484 / NBRC 15589 / NCIMB 2235) protein is Cell division protein SepF.